Consider the following 233-residue polypeptide: V-type proton ATPase subunit E (233 aa).

Belongs to the V-ATPase E subunit family. As to quaternary structure, V-ATPase is a heteromultimeric enzyme composed of a peripheral catalytic V1 complex (components A to H) attached to an integral membrane V0 proton pore complex (components: a, c, c', c'' and d).

Its function is as follows. Subunit of the peripheral V1 complex of vacuolar ATPase essential for assembly or catalytic function. V-ATPase is responsible for acidifying a variety of intracellular compartments in eukaryotic cells. In Dictyostelium discoideum (Social amoeba), this protein is V-type proton ATPase subunit E (vatE).